Reading from the N-terminus, the 156-residue chain is Small ribosomal subunit protein uS7 (156 aa).

This sequence belongs to the universal ribosomal protein uS7 family. As to quaternary structure, part of the 30S ribosomal subunit. Contacts proteins S9 and S11.

Functionally, one of the primary rRNA binding proteins, it binds directly to 16S rRNA where it nucleates assembly of the head domain of the 30S subunit. Is located at the subunit interface close to the decoding center, probably blocks exit of the E-site tRNA. In Trichormus variabilis (strain ATCC 29413 / PCC 7937) (Anabaena variabilis), this protein is Small ribosomal subunit protein uS7.